Reading from the N-terminus, the 409-residue chain is NADH-quinone oxidoreductase subunit D (409 aa).

This sequence belongs to the complex I 49 kDa subunit family. As to quaternary structure, NDH-1 is composed of 14 different subunits. Subunits NuoB, C, D, E, F, and G constitute the peripheral sector of the complex.

The protein resides in the cell inner membrane. It catalyses the reaction a quinone + NADH + 5 H(+)(in) = a quinol + NAD(+) + 4 H(+)(out). Its function is as follows. NDH-1 shuttles electrons from NADH, via FMN and iron-sulfur (Fe-S) centers, to quinones in the respiratory chain. The immediate electron acceptor for the enzyme in this species is believed to be ubiquinone. Couples the redox reaction to proton translocation (for every two electrons transferred, four hydrogen ions are translocated across the cytoplasmic membrane), and thus conserves the redox energy in a proton gradient. This Sulfurovum sp. (strain NBC37-1) protein is NADH-quinone oxidoreductase subunit D.